A 309-amino-acid chain; its full sequence is Olfactory receptor 5AC2 (309 aa).

The Extracellular segment spans residues 1-27 (MDISEGNKTLVTEFVLTGLTDRPWLHV). Asn7 carries N-linked (GlcNAc...) asparagine glycosylation. Residues 28 to 48 (LFFVVFLVVYLITMVGNLGLI) form a helical membrane-spanning segment. Residues 49-56 (VLIWNDPH) are Cytoplasmic-facing. The chain crosses the membrane as a helical span at residues 57 to 77 (LHMPMYLFLGGLAFSDACTST). Over 78–101 (SITPRMLVNFLDKTAMISLAECIT) the chain is Extracellular. Cys99 and Cys191 are joined by a disulfide. The chain crosses the membrane as a helical span at residues 102–122 (QFYFFASSATTECFLLVMMAY). The Cytoplasmic segment spans residues 123-135 (DRYVAICNPLLYP). The chain crosses the membrane as a helical span at residues 136–156 (VMMSNKLSAQLLSISYVIGFL). The Extracellular portion of the chain corresponds to 157-198 (HPLVHVSLLLRLTFCRFNIIHYFYCEILQLFKISCNGPSINA). Residues 199-219 (LMIFIFGAFIQIPTLMTIIIS) form a helical membrane-spanning segment. Over 220–239 (YTRVLFDILKKKSEKGRSKA) the chain is Cytoplasmic. A helical transmembrane segment spans residues 240–260 (FSTCGAHLLSVSLYYGTLIFM). Residues 261–273 (YVRPASGLAEDQD) are Extracellular-facing. The chain crosses the membrane as a helical span at residues 274–294 (KVYSLFYTIIIPLLNPFIYSL). Over 295–309 (RNKKVMHALRRVIRK) the chain is Cytoplasmic.

This sequence belongs to the G-protein coupled receptor 1 family.

It localises to the cell membrane. Its function is as follows. Odorant receptor. This is Olfactory receptor 5AC2 (OR5AC2) from Homo sapiens (Human).